A 206-amino-acid chain; its full sequence is MATIHLLDDDTAVTNACAFLLESLGYDVKCWTQGADFLAQASLYQAGVVLLDMRMPVLDGQGVHDALRQCGSTLAVVFLTGHGDVPMAVEQMKRGAVDFLQKPVSVKPLQAALERALTVSSAAVARREIILCYQQLTPKERELASLVAKGFMNREIAEAMNIAVRTVEVHRARVMEKMQAGSLAELIRRFEKMASPETRIRTTYEP.

Residues 3–117 enclose the Response regulatory domain; that stretch reads TIHLLDDDTA…PLQAALERAL (115 aa). 4-aspartylphosphate is present on Asp-52. The HTH luxR-type domain occupies 134-194; it reads QQLTPKEREL…ELIRRFEKMA (61 aa). Residues 153 to 172 constitute a DNA-binding region (H-T-H motif); it reads NREIAEAMNIAVRTVEVHRA.

Post-translationally, phosphorylated by TtrS.

Its subcellular location is the cytoplasm. Its function is as follows. Member of the two-component regulatory system TtrR/TtrS, which is required for synthesis of tetrathionate reductase. Positively regulates transcription of the ttrBCA operon. During mice infection, the ability to use tetrathionate as an electron acceptor is a growth advantage for S.typhimurium over the competing microbiota in the lumen of the inflamed gut. In Salmonella typhimurium (strain LT2 / SGSC1412 / ATCC 700720), this protein is Tetrathionate response regulatory protein TtrR (ttrR).